Consider the following 29-residue polypeptide: Cyclotide mra2 (29 aa).

Intrachain disulfides connect Cys-4-Cys-19, Cys-8-Cys-21, and Cys-13-Cys-26.

In terms of processing, this is a cyclic peptide. Contains 3 disulfide bonds.

Probably participates in a plant defense mechanism. This Melicytus ramiflorus (Whitey wood) protein is Cyclotide mra2.